The chain runs to 300 residues: Geranylgeranyl pyrophosphate synthase (300 aa).

An N-acetylmethionine modification is found at M1. Isopentenyl diphosphate contacts are provided by K25, R28, and H57. Mg(2+)-binding residues include D64 and D68. R73 serves as a coordination point for dimethylallyl diphosphate. Residue R74 coordinates isopentenyl diphosphate. Dimethylallyl diphosphate is bound by residues K151, T152, Q185, K202, and K212.

It belongs to the FPP/GGPP synthase family. In terms of assembly, homohexamer; trimer of homodimers. It depends on Mg(2+) as a cofactor.

The protein localises to the cytoplasm. It is found in the perinuclear region. Its subcellular location is the myofibril. It localises to the sarcomere. The protein resides in the z line. The enzyme catalyses isopentenyl diphosphate + dimethylallyl diphosphate = (2E)-geranyl diphosphate + diphosphate. It carries out the reaction isopentenyl diphosphate + (2E)-geranyl diphosphate = (2E,6E)-farnesyl diphosphate + diphosphate. It catalyses the reaction isopentenyl diphosphate + (2E,6E)-farnesyl diphosphate = (2E,6E,10E)-geranylgeranyl diphosphate + diphosphate. It functions in the pathway isoprenoid biosynthesis; farnesyl diphosphate biosynthesis; farnesyl diphosphate from geranyl diphosphate and isopentenyl diphosphate: step 1/1. The protein operates within isoprenoid biosynthesis; geranyl diphosphate biosynthesis; geranyl diphosphate from dimethylallyl diphosphate and isopentenyl diphosphate: step 1/1. Its pathway is isoprenoid biosynthesis; geranylgeranyl diphosphate biosynthesis; geranylgeranyl diphosphate from farnesyl diphosphate and isopentenyl diphosphate: step 1/1. Catalyzes the trans-addition of the three molecules of IPP onto DMAPP to form geranylgeranyl pyrophosphate, an important precursor of carotenoids and geranylated proteins. In Rattus norvegicus (Rat), this protein is Geranylgeranyl pyrophosphate synthase (Ggps1).